The chain runs to 156 residues: S-ribosylhomocysteine lyase (156 aa).

Positions 53, 57, and 122 each coordinate Fe cation.

Belongs to the LuxS family. Homodimer. Fe cation serves as cofactor.

The enzyme catalyses S-(5-deoxy-D-ribos-5-yl)-L-homocysteine = (S)-4,5-dihydroxypentane-2,3-dione + L-homocysteine. Functionally, involved in the synthesis of autoinducer 2 (AI-2) which is secreted by bacteria and is used to communicate both the cell density and the metabolic potential of the environment. The regulation of gene expression in response to changes in cell density is called quorum sensing. Catalyzes the transformation of S-ribosylhomocysteine (RHC) to homocysteine (HC) and 4,5-dihydroxy-2,3-pentadione (DPD). This is S-ribosylhomocysteine lyase from Finegoldia magna (strain ATCC 29328 / DSM 20472 / WAL 2508) (Peptostreptococcus magnus).